The sequence spans 560 residues: MSNKVHVGSLEMEEGLSKTKWMVLEPSEKIKKIPKRLWNVGKEDPRRVIHALKVGLSLTLVSLLYLMEPLFKGIGSNAIWAVMTVVVVLEFSAGATLCKGLNRGLGTLIAGSLAFFIEFVANDSGKVLRAIFIGTAVFIIGAAATYIRFIPYIKKNYDYGVVIFLLTFNLITVSSYRVDSVINIAHDRFYTIAVGCGICLFMSLLVFPIWSGEDLHKTTVGKLQGLSRSIEACVDEYFEEKEKEKTDSKDRIYEGYQAVLDSKSTDETLALYANWEPRHTLRCHRFPCQQYVKVGAVLRQFGYTVVALHGCLQTEIQTPRSVRALFKDPCVRLAGEVCKALTELADSISNHRHCSPEILSDHLHVALQDLNSAIKSQPKLFLGSNLHRHNNKHQNGSISNNKHHQRNSSNSGKDLNGDVSLQNTETGTRKITETGSRQGQNGAVSLSSFRTDTSALMEYRRSFKNSNSEMSAAGERRMLRPQLSKIAVMTSLEFSEALPFAAFASLLVEMVARLDNVIEEVEELGRIASFKEYDNKRDQTADDVRCENPANVTISVGAAE.

Helical transmembrane passes span V54–I74, A78–C98, G104–S124, A130–I150, N156–Y176, and F189–I209. The tract at residues L386–L421 is disordered. Residues N407–L421 show a composition bias toward polar residues.

This sequence belongs to the aromatic acid exporter (TC 2.A.85) family. In terms of tissue distribution, expressed in roots, stems, leaves, flowers and pollen. Mainly detected in the roots vascular stele and in the leaves guard cells.

Its subcellular location is the cell membrane. Functionally, malate-sensitive anion transporter permeable to chloride, nitrate, sulfate and malate. Involved in dark-, CO(2)-, abscisic acid- and water-deficient-induced stomatal closure. Belongs to the R-type anion channels. The protein is Aluminum-activated malate transporter 12 (ALMT12) of Arabidopsis thaliana (Mouse-ear cress).